Reading from the N-terminus, the 316-residue chain is MYLGVLLGGISREREISIRSGKRIAQALRNMGHVVDEIDVDDNFIYKLSELKKYDALFNILHGTFGEDGKMQAILDSIGIPYTGSGVETSVIAFDKYLCNLFVENTIERYEELSVVKIPNFLLISSEEFEESKIYMIEEKIGLPCVVKPRKEGSSIGTHICFSKEELLDALKNEFKNYDEMIVQEYIKGKEITVSVIDINGTPTVLPILELRPKKLFYDYEAKYTDGMTEFIIPAELDGETTEKINHAVLKIYKSLGCKHFSRIDGIVKDGVFYFLEVNTLPGMTELSDLPMSANAFGISFDELVDLIIKEACRKL.

The 203-residue stretch at 108 to 310 (ERYEELSVVK…FDELVDLIIK (203 aa)) folds into the ATP-grasp domain. 138 to 193 (EEKIGLPCVVKPRKEGSSIGTHICFSKEELLDALKNEFKNYDEMIVQEYIKGKEIT) provides a ligand contact to ATP. The Mg(2+) site is built by D265, E277, and N279.

It belongs to the D-alanine--D-alanine ligase family. Requires Mg(2+) as cofactor. It depends on Mn(2+) as a cofactor.

It is found in the cytoplasm. It catalyses the reaction 2 D-alanine + ATP = D-alanyl-D-alanine + ADP + phosphate + H(+). The protein operates within cell wall biogenesis; peptidoglycan biosynthesis. Its function is as follows. Cell wall formation. In Fervidobacterium nodosum (strain ATCC 35602 / DSM 5306 / Rt17-B1), this protein is D-alanine--D-alanine ligase.